The following is a 184-amino-acid chain: Peptide methionine sulfoxide reductase (184 aa).

Position 58 is a phosphoserine (S58).

This sequence belongs to the MsrA Met sulfoxide reductase family.

It catalyses the reaction L-methionyl-[protein] + [thioredoxin]-disulfide + H2O = L-methionyl-(S)-S-oxide-[protein] + [thioredoxin]-dithiol. The catalysed reaction is [thioredoxin]-disulfide + L-methionine + H2O = L-methionine (S)-S-oxide + [thioredoxin]-dithiol. Its function is as follows. Has an important function as a repair enzyme for proteins that have been inactivated by oxidation. Catalyzes the reversible oxidation-reduction of methionine sulfoxide in proteins to methionine. Also able to reduce dimethyl sulfoxide (DMSO) as well, with DMS as the product. This Saccharomyces cerevisiae (strain ATCC 204508 / S288c) (Baker's yeast) protein is Peptide methionine sulfoxide reductase (MXR1).